A 247-amino-acid polypeptide reads, in one-letter code: Adenosylcobinamide-GDP ribazoletransferase (247 aa).

A run of 6 helical transmembrane segments spans residues 31-51 (ILFYPLVGLIIGGILFLVTCI), 55-75 (LPALLLAAIVLALWIWLTGGL), 109-129 (IGVLSLVIICLLKFALVYVLI), 135-155 (LFLICIPILGRVVPSILFLTT), 183-203 (VLLLPLYWGWQGLIAIIGFLI), and 227-247 (AIEIGETVLMFTFVVSYFYLV).

Belongs to the CobS family. It depends on Mg(2+) as a cofactor.

Its subcellular location is the cell inner membrane. It carries out the reaction alpha-ribazole + adenosylcob(III)inamide-GDP = adenosylcob(III)alamin + GMP + H(+). The catalysed reaction is alpha-ribazole 5'-phosphate + adenosylcob(III)inamide-GDP = adenosylcob(III)alamin 5'-phosphate + GMP + H(+). The protein operates within cofactor biosynthesis; adenosylcobalamin biosynthesis; adenosylcobalamin from cob(II)yrinate a,c-diamide: step 7/7. In terms of biological role, joins adenosylcobinamide-GDP and alpha-ribazole to generate adenosylcobalamin (Ado-cobalamin). Also synthesizes adenosylcobalamin 5'-phosphate from adenosylcobinamide-GDP and alpha-ribazole 5'-phosphate. In Acinetobacter baumannii (strain ATCC 17978 / DSM 105126 / CIP 53.77 / LMG 1025 / NCDC KC755 / 5377), this protein is Adenosylcobinamide-GDP ribazoletransferase.